The chain runs to 248 residues: Probable transcriptional regulatory protein Pcar_2335 (248 aa).

It belongs to the TACO1 family.

The protein resides in the cytoplasm. The chain is Probable transcriptional regulatory protein Pcar_2335 from Syntrophotalea carbinolica (strain DSM 2380 / NBRC 103641 / GraBd1) (Pelobacter carbinolicus).